We begin with the raw amino-acid sequence, 162 residues long: ATP synthase subunit b (162 aa).

Residues 10–29 (LIWTIINFAVLLWGMHRFLY) form a helical membrane-spanning segment.

It belongs to the ATPase B chain family. F-type ATPases have 2 components, F(1) - the catalytic core - and F(0) - the membrane proton channel. F(1) has five subunits: alpha(3), beta(3), gamma(1), delta(1), epsilon(1). F(0) has three main subunits: a(1), b(2) and c(10-14). The alpha and beta chains form an alternating ring which encloses part of the gamma chain. F(1) is attached to F(0) by a central stalk formed by the gamma and epsilon chains, while a peripheral stalk is formed by the delta and b chains.

It is found in the cell membrane. Its function is as follows. F(1)F(0) ATP synthase produces ATP from ADP in the presence of a proton or sodium gradient. F-type ATPases consist of two structural domains, F(1) containing the extramembraneous catalytic core and F(0) containing the membrane proton channel, linked together by a central stalk and a peripheral stalk. During catalysis, ATP synthesis in the catalytic domain of F(1) is coupled via a rotary mechanism of the central stalk subunits to proton translocation. Functionally, component of the F(0) channel, it forms part of the peripheral stalk, linking F(1) to F(0). This is ATP synthase subunit b from Symbiobacterium thermophilum (strain DSM 24528 / JCM 14929 / IAM 14863 / T).